The following is a 381-amino-acid chain: Glucose-1-phosphate adenylyltransferase (381 aa).

Residues Tyr-100, Gly-165, Glu-180–Lys-181, and Ser-191 each bind alpha-D-glucose 1-phosphate.

This sequence belongs to the bacterial/plant glucose-1-phosphate adenylyltransferase family. As to quaternary structure, homotetramer.

It catalyses the reaction alpha-D-glucose 1-phosphate + ATP + H(+) = ADP-alpha-D-glucose + diphosphate. It functions in the pathway glycan biosynthesis; glycogen biosynthesis. Functionally, involved in the biosynthesis of ADP-glucose, a building block required for the elongation reactions to produce glycogen. Catalyzes the reaction between ATP and alpha-D-glucose 1-phosphate (G1P) to produce pyrophosphate and ADP-Glc. The polypeptide is Glucose-1-phosphate adenylyltransferase (Mycoplasma mobile (strain ATCC 43663 / 163K / NCTC 11711) (Mesomycoplasma mobile)).